Consider the following 356-residue polypeptide: Glutamate 5-kinase (356 aa).

K6 is an ATP binding site. Substrate-binding residues include S46, D135, and N147. ATP is bound at residue 202–208 (TGGMRSK). Residues 265–342 (KGIIVVDRGA…SEVRKLLNTT (78 aa)) enclose the PUA domain.

Belongs to the glutamate 5-kinase family.

It is found in the cytoplasm. The enzyme catalyses L-glutamate + ATP = L-glutamyl 5-phosphate + ADP. Its pathway is amino-acid biosynthesis; L-proline biosynthesis; L-glutamate 5-semialdehyde from L-glutamate: step 1/2. Functionally, catalyzes the transfer of a phosphate group to glutamate to form L-glutamate 5-phosphate. The polypeptide is Glutamate 5-kinase (Aquifex aeolicus (strain VF5)).